The primary structure comprises 67 residues: MKNVFKALTVLLTLFSLTGCGLKGPLYFPPADKNAPPPTKPVETQTQSTVPDKNDRATGDGPSQVNY.

The first 19 residues, 1–19, serve as a signal peptide directing secretion; it reads MKNVFKALTVLLTLFSLTG. Cys20 carries N-palmitoyl cysteine lipidation. Cys20 carries the S-diacylglycerol cysteine lipid modification. The interval 26 to 67 is disordered; it reads LYFPPADKNAPPPTKPVETQTQSTVPDKNDRATGDGPSQVNY. The span at 42 to 51 shows a compositional bias: polar residues; it reads VETQTQSTVP.

It belongs to the LptM family. As to quaternary structure, interacts with the outer membrane embedded portion of the LPS translocon formed by LptD and LptE (LptDE).

It is found in the cell outer membrane. Its function is as follows. Component of the lipopolysaccharide (LPS) transport (Lpt) pathway that promotes efficient assembly of the outer membrane LPS translocon (LptDE) by the BAM complex. Facilitates oxidative maturation of LptD by stabilizing a conformation of the LPS translocon in which LptD can efficiently acquire native disulfide bonds, thereby activating the LPS translocon. The sequence is that of LPS-assembly lipoprotein LptM from Escherichia coli O157:H7.